The chain runs to 418 residues: Triacylglycerol lipase 2 (418 aa).

A signal peptide spans 1 to 31 (MAGSVMVPSVSIGLALSVLIFFALSLKTLEA). Asn158 carries an N-linked (GlcNAc...) asparagine glycan. The active-site Nucleophile is Ser190. N-linked (GlcNAc...) asparagine glycans are attached at residues Asn286 and Asn342. Catalysis depends on charge relay system residues Asp360 and His393.

It belongs to the AB hydrolase superfamily. Lipase family.

The protein resides in the secreted. The catalysed reaction is a triacylglycerol + H2O = a diacylglycerol + a fatty acid + H(+). Its function is as follows. Triacylglycerol (TAG) lipase. May be involved for TAG storage breakdown during seed germination. This chain is Triacylglycerol lipase 2 (LIP2), found in Arabidopsis thaliana (Mouse-ear cress).